The primary structure comprises 577 residues: Thrombomodulin (577 aa).

Residues 1 to 16 (MLGIFFLGVLAPASLG) form the signal peptide. At 17–517 (LSALAKLQPT…GPPSARPVHS (501 aa)) the chain is on the extracellular side. The C-type lectin domain maps to 31–167 (VEHECFALFQ…TETQGFLCEF (137 aa)). A glycan (N-linked (GlcNAc...) asparagine) is linked at Asn-113. Cys-135 and Cys-156 are oxidised to a cystine. EGF-like domains lie at 240–280 (GAWN…RSCA) and 283–323 (VVQS…HRCE). Residue Asn-243 is glycosylated (N-linked (GlcNAc...) asparagine). 18 cysteine pairs are disulfide-bonded: Cys-244/Cys-255, Cys-251/Cys-264, Cys-266/Cys-279, Cys-287/Cys-295, Cys-291/Cys-307, Cys-309/Cys-322, Cys-328/Cys-339, Cys-335/Cys-348, Cys-350/Cys-361, Cys-368/Cys-377, Cys-373/Cys-387, Cys-389/Cys-403, Cys-407/Cys-416, Cys-412/Cys-424, Cys-426/Cys-438, Cys-444/Cys-454, Cys-449/Cys-463, and Cys-465/Cys-479. N-linked (GlcNAc...) asparagine glycosylation occurs at Asn-256. The EGF-like 3; calcium-binding domain occupies 324–362 (DVDDCKQGPNPCPQLCVNTKGGFECFCYDGYELVDGECV). 2 consecutive EGF-like domains span residues 364 to 404 (LLDP…HKCE) and 403 to 439 (CEMF…SVCT). The N-linked (GlcNAc...) asparagine glycan is linked to Asn-408. The EGF-like 6; calcium-binding domain occupies 440–480 (DIDECSQGECFTSECRNFPGSYECICGPDTALAGQISKDCD). A disordered region spans residues 476–513 (SKDCDPIPVREDTKEEEGSGEPPVSPTPGSPTGPPSAR). Positions 477–492 (KDCDPIPVREDTKEEE) are enriched in basic and acidic residues. O-linked (Xyl...) (chondroitin sulfate) serine glycosylation is present at Ser-494. Residues 498–512 (PVSPTPGSPTGPPSA) are compositionally biased toward pro residues. A helical membrane pass occupies residues 518 to 541 (GVLIGISIASLSLVVALLALLCHL). Topologically, residues 542–577 (RKKQGAARAELEYKCASSAKEVVLQHVRTDRTLQKF) are cytoplasmic.

As to quaternary structure, interacts with ITGAL, ITGAM and ITGB2. Interacts with thrombin/F2; this interaction switches the specificity of thrombin from a procoagulant to an anticoagulant and antifibrinolytic protease. Interacts with ANGP1 and ANGP2; these interactions significantly inhibit the generation of activated PC and TAFIa/CPB2 by the thrombin/thrombomodulin complex. Interacts with PF4; this interaction enhances generation of activated protein C. Interacts with HMGB1; this interaction inhibits HMGB1 inflammatory activity. As to expression, endothelial cells are unique in synthesizing thrombomodulin.

The protein resides in the membrane. Functionally, endothelial cell receptor that plays a critical role in regulating several physiological processes including hemostasis, coagulation, fibrinolysis, inflammation, and angiogenesis. Acts as a cofactor for thrombin activation of protein C/PROC on the surface of vascular endothelial cells leading to initiation of the activated protein C anticoagulant pathway. Also accelerates the activation of the plasma carboxypeptidase B2/CPB2, which catalyzes removal of C-terminal basic amino acids from its substrates including kinins or anaphylatoxins leading to fibrinolysis inhibition. Plays critical protective roles in changing the cleavage specificity of protease-activated receptor 1/PAR1, inhibiting endothelial cell permeability and inflammation. Suppresses inflammation distinctly from its anticoagulant cofactor activity by sequestering HMGB1 thereby preventing it from engaging cellular receptors such as RAGE and contributing to the inflammatory response. The chain is Thrombomodulin (Thbd) from Mus musculus (Mouse).